Here is a 219-residue protein sequence, read N- to C-terminus: Mediator of RNA polymerase II transcription subunit 20b (219 aa).

This sequence belongs to the Mediator complex subunit 20 family. In terms of assembly, component of the Mediator complex.

The protein resides in the nucleus. In terms of biological role, component of the Mediator complex, a coactivator involved in the regulated transcription of nearly all RNA polymerase II-dependent genes. Mediator functions as a bridge to convey information from gene-specific regulatory proteins to the basal RNA polymerase II transcription machinery. The Mediator complex, having a compact conformation in its free form, is recruited to promoters by direct interactions with regulatory proteins and serves for the assembly of a functional preinitiation complex with RNA polymerase II and the general transcription factors. The sequence is that of Mediator of RNA polymerase II transcription subunit 20b (MED20B) from Arabidopsis thaliana (Mouse-ear cress).